Reading from the N-terminus, the 607-residue chain is Elongation factor 4 (607 aa).

The 183-residue stretch at 11–193 (EKIRNFSIIA…QIVEKVPAPT (183 aa)) folds into the tr-type G domain. Residues 23-28 (DHGKST) and 140-143 (NKID) each bind GTP.

This sequence belongs to the TRAFAC class translation factor GTPase superfamily. Classic translation factor GTPase family. LepA subfamily.

The protein localises to the cell membrane. The catalysed reaction is GTP + H2O = GDP + phosphate + H(+). Required for accurate and efficient protein synthesis under certain stress conditions. May act as a fidelity factor of the translation reaction, by catalyzing a one-codon backward translocation of tRNAs on improperly translocated ribosomes. Back-translocation proceeds from a post-translocation (POST) complex to a pre-translocation (PRE) complex, thus giving elongation factor G a second chance to translocate the tRNAs correctly. Binds to ribosomes in a GTP-dependent manner. The polypeptide is Elongation factor 4 (Streptococcus gordonii (strain Challis / ATCC 35105 / BCRC 15272 / CH1 / DL1 / V288)).